Here is a 935-residue protein sequence, read N- to C-terminus: Coiled-coil domain-containing protein 191 (935 aa).

Coiled-coil stretches lie at residues 189–324 (RLTM…ENQQ), 366–438 (YTRS…ALLK), 554–589 (RHVF…AEAQ), and 660–740 (KAME…LEAI). Disordered stretches follow at residues 596–661 (SAVT…ILKA) and 678–715 (EKKK…RKRE).

This Macaca fascicularis (Crab-eating macaque) protein is Coiled-coil domain-containing protein 191 (CCDC191).